The primary structure comprises 652 residues: Proline-rich receptor-like protein kinase PERK1 (652 aa).

The disordered stretch occupies residues 1 to 137 (MSTAPSPGTT…PPSDSSDGLS (137 aa)). At 1 to 139 (MSTAPSPGTT…SDSSDGLSTG (139 aa)) the chain is on the extracellular side. Over residues 8 to 19 (GTTPSPSPPSPP) the composition is skewed to pro residues. Residues Asn21 and Asn50 are each glycosylated (N-linked (GlcNAc...) asparagine). A compositionally biased stretch (pro residues) spans 26-112 (TPPPAASSPP…PSPNQGPPNT (87 aa)). The segment covering 113–137 (PSGSTPRTPSNTKPSPPSDSSDGLS) has biased composition (low complexity). Residues 140 to 160 (VVVGIAIGGVAILVILTLICL) traverse the membrane as a helical segment. Residues 161-652 (LCKKKRRRRH…TGQGYSGPSL (492 aa)) lie on the Cytoplasmic side of the membrane. Positions 169–251 (RHDDEAAYYV…GGSDYSDLPV (83 aa)) are disordered. The segment covering 203–213 (NASRPSDNHVV) has biased composition (polar residues). The span at 216–236 (LPPPKPPSPPRKPPPPPPPPA) shows a compositional bias: pro residues. Position 269 is a phosphothreonine (Thr269). The 280-residue stretch at 280–559 (FSEANLLGQG…VRALEGNVSL (280 aa)) folds into the Protein kinase domain. Residues 286-294 (LGQGGFGYV) and Lys308 each bind ATP. At Tyr353 the chain carries Phosphotyrosine. The active-site Proton acceptor is Asp404. Ser408 and Ser437 each carry phosphoserine. Residues Thr438 and Thr443 each carry the phosphothreonine modification. Position 451 is a phosphotyrosine (Tyr451). Over residues 605–616 (YGTTGEYSNPTS) the composition is skewed to polar residues. The interval 605-652 (YGTTGEYSNPTSDYGLYPSGSSSEGQATREMEMGKIKKTGQGYSGPSL) is disordered.

It belongs to the protein kinase superfamily. Ser/Thr protein kinase family. In terms of tissue distribution, mostly expressed in inflorescence bolt, flower buds and siliques, and, to a lower extent, in roots, seedlings and leaves.

The protein resides in the cell membrane. The catalysed reaction is L-seryl-[protein] + ATP = O-phospho-L-seryl-[protein] + ADP + H(+). It catalyses the reaction L-threonyl-[protein] + ATP = O-phospho-L-threonyl-[protein] + ADP + H(+). In Arabidopsis thaliana (Mouse-ear cress), this protein is Proline-rich receptor-like protein kinase PERK1 (PERK1).